A 250-amino-acid polypeptide reads, in one-letter code: MPDINNDVVAANFSRASRSYDLVAKIQKECCYKLVAMIRERLPHFMPASVLDIGAGTGYLTKLLLSEFPNACYTMNDISYEMLSRAREMVGESVSTILGDMSKVKFPVSDLIVSSMAIHWSSNPITVLKRVCRLSKVFAFSILVQPSLYEWNRLFHELSLPSPGLHYISSEEVELAMLDTSPTLFTWEVCNFDMRFASPKEFIRYMRQLGSNYSPAGFNAYHVRKVLKHAPGEFFSKYSVMFGVVSRSHF.

It belongs to the methyltransferase superfamily.

It carries out the reaction malonyl-[ACP] + S-adenosyl-L-methionine = malonyl-[ACP] methyl ester + S-adenosyl-L-homocysteine. The protein operates within cofactor biosynthesis; biotin biosynthesis. Its function is as follows. Converts the free carboxyl group of a malonyl-thioester to its methyl ester by transfer of a methyl group from S-adenosyl-L-methionine (SAM). It allows to synthesize pimeloyl-ACP via the fatty acid synthetic pathway. In Neorickettsia risticii (strain Illinois), this protein is Malonyl-[acyl-carrier protein] O-methyltransferase.